Reading from the N-terminus, the 428-residue chain is Glutamyl-tRNA reductase (428 aa).

Residues Thr49 to Arg52, Ser109, Glu114 to Gln116, and Gln120 each bind substrate. The active-site Nucleophile is Cys50. NADP(+) is bound at residue Gly189–Ser194.

This sequence belongs to the glutamyl-tRNA reductase family. Homodimer.

The catalysed reaction is (S)-4-amino-5-oxopentanoate + tRNA(Glu) + NADP(+) = L-glutamyl-tRNA(Glu) + NADPH + H(+). The protein operates within porphyrin-containing compound metabolism; protoporphyrin-IX biosynthesis; 5-aminolevulinate from L-glutamyl-tRNA(Glu): step 1/2. It participates in porphyrin-containing compound metabolism; chlorophyll biosynthesis. Catalyzes the NADPH-dependent reduction of glutamyl-tRNA(Glu) to glutamate 1-semialdehyde (GSA). The chain is Glutamyl-tRNA reductase from Gloeothece citriformis (strain PCC 7424) (Cyanothece sp. (strain PCC 7424)).